The sequence spans 360 residues: Leukotriene B4 receptor 2 (360 aa).

At Met1–Thr24 the chain is on the extracellular side. The N-linked (GlcNAc...) asparagine glycan is linked to Asn10. A helical membrane pass occupies residues Ala25 to Leu45. Residues Ala46–Leu60 are Cytoplasmic-facing. A helical membrane pass occupies residues Val61 to Phe81. Over Leu82–Ala96 the chain is Extracellular. The helical transmembrane segment at Val97–Leu117 threads the bilayer. At Gln118 to Arg140 the chain is on the cytoplasmic side. A helical membrane pass occupies residues Leu141–His161. Topologically, residues Leu162–Glu185 are extracellular. The chain crosses the membrane as a helical span at residues Thr186–Ala206. Over Arg207–Arg224 the chain is Cytoplasmic. A helical membrane pass occupies residues Leu225 to Leu245. The Extracellular portion of the chain corresponds to Leu246 to Ala275. The helical transmembrane segment at Leu276 to Leu296 threads the bilayer. Residues Pro297–Trp360 are Cytoplasmic-facing. The interval Ser311–Trp360 is disordered. Over residues Gln338–Gly350 the composition is skewed to gly residues. Residues Gly351–Trp360 are compositionally biased toward basic and acidic residues.

The protein belongs to the G-protein coupled receptor 1 family.

Its subcellular location is the cell membrane. Its function is as follows. Low-affinity receptor for leukotrienes including leukotriene B4. Mediates chemotaxis of granulocytes and macrophages. The response is mediated via G-proteins that activate a phosphatidylinositol-calcium second messenger system. In Mus musculus (Mouse), this protein is Leukotriene B4 receptor 2 (Ltb4r2).